The chain runs to 141 residues: Nucleoside diphosphate kinase (141 aa).

ATP contacts are provided by K11, F59, R87, T93, R104, and N114. The Pros-phosphohistidine intermediate role is filled by H117.

The protein belongs to the NDK family. Homotetramer. It depends on Mg(2+) as a cofactor.

The protein localises to the cytoplasm. The enzyme catalyses a 2'-deoxyribonucleoside 5'-diphosphate + ATP = a 2'-deoxyribonucleoside 5'-triphosphate + ADP. It carries out the reaction a ribonucleoside 5'-diphosphate + ATP = a ribonucleoside 5'-triphosphate + ADP. Its function is as follows. Major role in the synthesis of nucleoside triphosphates other than ATP. The ATP gamma phosphate is transferred to the NDP beta phosphate via a ping-pong mechanism, using a phosphorylated active-site intermediate. This chain is Nucleoside diphosphate kinase, found in Burkholderia thailandensis (strain ATCC 700388 / DSM 13276 / CCUG 48851 / CIP 106301 / E264).